The following is a 360-amino-acid chain: Tryptophan--tRNA ligase, mitochondrial (360 aa).

A mitochondrion-targeting transit peptide spans Met1–Ala18. ATP-binding positions include Gln42 and His48–Asn51. Asp167 lines the L-tryptophan pocket. ATP contacts are provided by residues Gly179–Asp181, Val217, and Lys226–Ser230.

Belongs to the class-I aminoacyl-tRNA synthetase family. Brain.

The protein localises to the mitochondrion matrix. Its subcellular location is the mitochondrion. The catalysed reaction is tRNA(Trp) + L-tryptophan + ATP = L-tryptophyl-tRNA(Trp) + AMP + diphosphate + H(+). Its function is as follows. Catalyzes the attachment of tryptophan to tRNA(Trp) in a two-step reaction: tryptophan is first activated by ATP to form Trp-AMP and then transferred to the acceptor end of tRNA(Trp). This chain is Tryptophan--tRNA ligase, mitochondrial (WARS2), found in Homo sapiens (Human).